A 290-amino-acid polypeptide reads, in one-letter code: Aquaporin PIP2-1 (290 aa).

The tract at residues 1–20 is disordered; sequence MGKDDVIESGAGGGEFAAKD. The next 2 membrane-spanning stretches (helical) occupy residues 43-63 and 80-100; these read AVIA…ATVI and CGGV…FVLV. An NPA 1 motif is present at residues 112–114; the sequence is NPA. 3 helical membrane-spanning segments follow: residues 131-151, 173-193, and 205-225; these read LLYI…VKAF, GTGL…VFSA, and VPVL…LATI. The NPA 2 signature appears at 233-235; that stretch reads NPA. A helical transmembrane segment spans residues 255–275; sequence IFWVGPLVGAAIAAFYHQYIL.

It belongs to the MIP/aquaporin (TC 1.A.8) family. PIP (TC 1.A.8.11) subfamily. In terms of assembly, homomers. Can interact with PIP1-2 to form heteromers. As to expression, expressed in roots.

It is found in the cell membrane. Functionally, water channel required to facilitate the transport of water across cell membrane. Active as homomers. Increased activity when heteromerization with PIP1-2. The protein is Aquaporin PIP2-1 (PIP2-1) of Zea mays (Maize).